A 212-amino-acid chain; its full sequence is ER lumen protein-retaining receptor 2 (212 aa).

The Lumenal portion of the chain corresponds to 1–4; it reads MNIF. A helical transmembrane segment spans residues 5 to 24; it reads RLTGDLSHLAAIIILLLKIW. The Cytoplasmic portion of the chain corresponds to 25-32; that stretch reads KSRSCAGI. The chain crosses the membrane as a helical span at residues 33-52; sequence SGKSQLLFALVFTTRYLDLF. The segment at 47 to 48 is interaction with the K-D-E-L motif on target proteins; the sequence is RY. Residues 53–58 are Lumenal-facing; that stretch reads TSFISL. A helical transmembrane segment spans residues 59–79; sequence YNTSMKLIYIACSYATVYLIY. Residues 80–92 are Cytoplasmic-facing; sequence MKFKATYDGNHDT. The chain crosses the membrane as a helical span at residues 93–110; it reads FRVEFLIVPVGGLSFLVN. At 111-116 the chain is on the lumenal side; it reads HDFSPL. A helical membrane pass occupies residues 117-135; the sequence is EILWTFSIYLESVAILPQL. Residues 136–149 are Cytoplasmic-facing; it reads FMISKTGEAETITT. Residues 150-168 traverse the membrane as a helical segment; the sequence is HYLFFLGLYRALYLVNWIW. The interval 159–169 is interaction with the K-D-E-L motif on target proteins; that stretch reads RALYLVNWIWR. Residues 169–178 lie on the Lumenal side of the membrane; the sequence is RYYFEGFFDL. Residues 179–199 traverse the membrane as a helical segment; sequence IAVVAGVVQTVLYCDFFYLYV. The Cytoplasmic segment spans residues 200–212; it reads TKVLKGKKLSLPA. The interval 204–207 is important for recycling of cargo proteins with the sequence motif K-D-E-L from the Golgi to the endoplasmic reticulum; sequence KGKK.

It belongs to the ERD2 family.

It is found in the endoplasmic reticulum membrane. Its subcellular location is the golgi apparatus membrane. The protein resides in the cytoplasmic vesicle. The protein localises to the COPI-coated vesicle membrane. In terms of biological role, membrane receptor that binds the K-D-E-L sequence motif in the C-terminal part of endoplasmic reticulum resident proteins and maintains their localization in that compartment by participating to their vesicle-mediated recycling back from the Golgi. Binding is pH dependent, and is optimal at pH 5-5.4. The sequence is that of ER lumen protein-retaining receptor 2 (KDELR2) from Gallus gallus (Chicken).